The chain runs to 342 residues: Ankyrin repeat domain-containing protein 2A (342 aa).

Residues Met1–Gly41 form a disordered region. The segment covering Ser12 to Lys26 has biased composition (basic and acidic residues). Low complexity predominate over residues Pro27–Ser37. ANK repeat units follow at residues Glu217–Glu246, Glu250–Ala279, Asn283–Leu312, and Asp316–Leu342. A 1,2-diacyl-3-O-(beta-D-galactosyl)-sn-glycerol is bound by residues His223 and Glu246. A 1,2-diacyl-sn-glycero-3-phospho-(1'-sn-glycerol) contacts are provided by Tyr294 and Arg296.

Interacts with TOM20-4, CYTB5-E, CBR1, APX3, APX5, TOC34 and GRF6. Binds to chloroplast outer envelope membrane (OEM) protein targeting signals, as well as to chloroplasts. Interacts with OEP7. Binds to HSP17.8 via its ankyrin repeats, this interaction enhances chaperone activity and chloroplast binding. Also interacts with HSP17.4A, HSP17.6A and HSP18.1. Binds specifically to two chloroplast glycolipids, monogalactosyldiacylglycerol (MGDG) and phosphatidylglycerol (PG). In terms of tissue distribution, ubiquitously expressed at basal level.

The protein localises to the cytoplasm. The protein resides in the nucleus. It localises to the plastid. Its subcellular location is the chloroplast outer membrane. Functionally, exhibits chaperone activity toward chloroplast outer envelope membrane, mitochondrion outer membrane, endoplasmic reticulum membrane and peroxisomal proteins, by recruiting specific proteins containing a single transmembrane associated with an AKR2A-binding sequence (ABS) and subsequently binding glycolipids (e.g. monogalactosyldiacylglycerol (MGDG) and phosphatidylglycerol (PG)) present in the membrane of the target organelle. Seems to be involved in the regulation of hydrogen peroxide levels during biotic and abiotic stresses by optimizing the ascorbate peroxidase 3 (APX3) hydrogen peroxide-degrading activity. This regulation might be monitored by GRF6. Cytosolic targeting factor for chloroplast outer membrane (COM) proteins that mediates sorting and targeting of nascent chloroplast outer envelope membrane (OEM) proteins to the chloroplast. Facilitates the targeting of OEP7 to chloroplasts. Facilitates the targeting of APX3 to peroxisomes. Involved in cellular metabolism (e.g. peroxisome activity) and required for plant growth and development. This Arabidopsis thaliana (Mouse-ear cress) protein is Ankyrin repeat domain-containing protein 2A.